Here is a 332-residue protein sequence, read N- to C-terminus: Leucine carboxyl methyltransferase 1 (332 aa).

Residues R71, G96, D120, 169–170 (DL), and E196 contribute to the S-adenosyl-L-methionine site.

Belongs to the methyltransferase superfamily. LCMT family.

The catalysed reaction is [phosphatase 2A protein]-C-terminal L-leucine + S-adenosyl-L-methionine = [phosphatase 2A protein]-C-terminal L-leucine methyl ester + S-adenosyl-L-homocysteine. Its function is as follows. Methylates the carboxyl group of the C-terminal leucine residue of protein phosphatase 2A catalytic subunits to form alpha-leucine ester residues. This is Leucine carboxyl methyltransferase 1 (Lcmt1) from Rattus norvegicus (Rat).